The sequence spans 465 residues: MISNGIGTVTTGKRSMCLFPLLLIGLWGCVTCHRSPVEDICTAKPRDIPVNPMCIYRSPEKKATEGEGSEQKIPGATNRRVWELSKANSHFATAFYQHLADSKNNNDNIFLSPLSISTAFAMTKLGACNNTLKQLMEVFKFDTISEKTSDQIHFFFAKLNCRLYRKANKSSELVSANRLFGDKSITFNETYQDISEVVYGAKLQPLDFKGNAEQSRLTINQWISNKTEGRITDVIPPQAIDEFTVLVLVNTIYFKGLWKSKFSPENTKKELFYKADGESCSVPMMYQEGKFRYRRVAEGTQVLELPFKGDDITMVLILPKLEKPLAKVERELTPDMLQEWLDELTETLLVVHMPHFRIEDSFSVKEQLQDMGLEDLFSPEKSRLPGIVAEGRNDLYVSDAFHKAFLEVNEEGSEAAASTVISIAGRSLNLNRVTFQANRPFLVLIREVALNTIIFMGRVANPCVN.

The signal sequence occupies residues 1–32 (MISNGIGTVTTGKRSMCLFPLLLIGLWGCVTC). 2 disulfide bridges follow: Cys-41/Cys-161 and Cys-54/Cys-128. A Phosphothreonine modification is found at Thr-64. Ser-69 is modified (phosphoserine). Position 82 (Trp-82) interacts with heparin. Asn-129 carries an N-linked (GlcNAc...) asparagine glycan. Arg-162 is a binding site for heparin. N-linked (GlcNAc...) asparagine glycosylation occurs at Asn-168. Arg-178 contributes to the heparin binding site. Residues Asn-188 and Asn-225 are each glycosylated (N-linked (GlcNAc...) asparagine). A disulfide bridge links Cys-280 with Cys-463.

Belongs to the serpin family. In terms of assembly, forms protease inhibiting heterodimer with TMPRSS7. In terms of processing, phosphorylated by FAM20C in the extracellular medium. In terms of tissue distribution, plasma.

The protein localises to the secreted. The protein resides in the extracellular space. Its function is as follows. Most important serine protease inhibitor in plasma that regulates the blood coagulation cascade. AT-III inhibits thrombin, matriptase-3/TMPRSS7, as well as factors IXa, Xa and XIa. Its inhibitory activity is greatly enhanced in the presence of heparin. The chain is Antithrombin-III (SERPINC1) from Ovis aries (Sheep).